Here is a 93-residue protein sequence, read N- to C-terminus: MLTVNSYFEDKVKSIGFEQNSNAISVGVMLPGNYTFGTAAAEKMSVITGALTIKRSTDADWVTFSSGEDFSVEGNSSFEVKVEIETAYLCEYL.

The protein belongs to the nucleoside phosphorylase PpnP family.

The enzyme catalyses a purine D-ribonucleoside + phosphate = a purine nucleobase + alpha-D-ribose 1-phosphate. It carries out the reaction adenosine + phosphate = alpha-D-ribose 1-phosphate + adenine. The catalysed reaction is cytidine + phosphate = cytosine + alpha-D-ribose 1-phosphate. It catalyses the reaction guanosine + phosphate = alpha-D-ribose 1-phosphate + guanine. The enzyme catalyses inosine + phosphate = alpha-D-ribose 1-phosphate + hypoxanthine. It carries out the reaction thymidine + phosphate = 2-deoxy-alpha-D-ribose 1-phosphate + thymine. The catalysed reaction is uridine + phosphate = alpha-D-ribose 1-phosphate + uracil. It catalyses the reaction xanthosine + phosphate = alpha-D-ribose 1-phosphate + xanthine. Catalyzes the phosphorolysis of diverse nucleosides, yielding D-ribose 1-phosphate and the respective free bases. Can use uridine, adenosine, guanosine, cytidine, thymidine, inosine and xanthosine as substrates. Also catalyzes the reverse reactions. The polypeptide is Pyrimidine/purine nucleoside phosphorylase (Aliivibrio fischeri (strain ATCC 700601 / ES114) (Vibrio fischeri)).